A 222-amino-acid chain; its full sequence is Pre-mRNA cleavage factor Im 25 kDa subunit 1 (222 aa).

The Nudix hydrolase domain maps to 67–194 (GLRTCVEAVL…KLLAVPLCQL (128 aa)). An interaction with RNA region spans residues 94-96 (SIF). A Nudix box motif is present at residues 101 to 122 (GRLRPGESDIEGLKRKLASKLS).

The protein belongs to the Nudix hydrolase family. CPSF5 subfamily. In terms of assembly, homodimer. Component of the cleavage factor Im (CFIm) complex. Forms a complex with cleavage and polyadenylation specificity factor (CPSF) subunits FIPS5.

The protein resides in the nucleus. Component of the cleavage factor Im (CFIm) complex that plays a key role in pre-mRNA 3'-processing. Involved in association with CPSF6 or CPSF7 in pre-MRNA 3'-end poly(A) site cleavage and poly(A) addition. NUDT21/CPSF5 binds to cleavage and polyadenylation RNA substrates. The homodimer mediates simultaneous sequence-specific recognition of two 5'-UGUA-3' elements within the pre-mRNA. Binds to, but does not hydrolyze mono- and di-adenosine nucleotides. May have a role in mRNA export. In Arabidopsis thaliana (Mouse-ear cress), this protein is Pre-mRNA cleavage factor Im 25 kDa subunit 1.